We begin with the raw amino-acid sequence, 117 residues long: Large ribosomal subunit protein uL23 (117 aa).

It belongs to the universal ribosomal protein uL23 family. As to quaternary structure, part of the 50S ribosomal subunit. Contacts protein L29, and trigger factor when it is bound to the ribosome.

One of the early assembly proteins it binds 23S rRNA. One of the proteins that surrounds the polypeptide exit tunnel on the outside of the ribosome. Forms the main docking site for trigger factor binding to the ribosome. The protein is Large ribosomal subunit protein uL23 of Acetivibrio thermocellus (strain ATCC 27405 / DSM 1237 / JCM 9322 / NBRC 103400 / NCIMB 10682 / NRRL B-4536 / VPI 7372) (Clostridium thermocellum).